We begin with the raw amino-acid sequence, 633 residues long: Telomere-binding protein 1 (633 aa).

Residues 253-272 (HAADRDDDENSSGCVHPSTS) are disordered. Positions 263–272 (SSGCVHPSTS) are enriched in polar residues. Residues 351–430 (VKLTIKSFNI…LNDIGFTLEC (80 aa)) form the Ubiquitin-like domain. A sufficient for telomeric DNA binding region spans residues 506-615 (PFADPNSLAL…RVLAAQAYWS (110 aa)). The HTH myb-type domain occupies 529–588 (GQRRIRRPFTVAEVELLVEAVEHLGTGRWRDVKFRAFENVHHRTYVDLKDKWKTLVHTAS). The region spanning 534–584 (RRPFTVAEVELLVEAVEHLGTGRWRDVKFRAFENVHHRTYVDLKDKWKTLV) is the SANT domain. Positions 557 to 584 (WRDVKFRAFENVHHRTYVDLKDKWKTLV) form a DNA-binding region, H-T-H motif.

As to quaternary structure, homodimer. In terms of tissue distribution, ubiquitous.

The protein localises to the chromosome. It is found in the telomere. In terms of biological role, binds the telomeric double-stranded 5'TTTAGGG-3' repeat and regulates telomere length and structure. This is Telomere-binding protein 1 (TBP1) from Oryza sativa subsp. japonica (Rice).